A 339-amino-acid polypeptide reads, in one-letter code: Alpha-ketoglutarate-dependent dioxygenase btcD (339 aa).

A substrate-binding site is contributed by histidine 96. Histidine 140 and aspartate 142 together coordinate Fe cation. Threonine 173 is a 2-oxoglutarate binding site. The disordered stretch occupies residues 207 to 230 (DGSDPKFQVPRGSPANVGTNLRPT). Histidine 302 lines the Fe cation pocket. Positions 314 and 318 each coordinate 2-oxoglutarate. A substrate-binding site is contributed by arginine 318.

It belongs to the TfdA dioxygenase family. Fe(2+) is required as a cofactor.

It participates in secondary metabolite biosynthesis; terpenoid biosynthesis. Alpha-ketoglutarate-dependent dioxygenase; part of the gene cluster that mediates the biosynthesis of betaestacins. The bifunctional terpene synthase btcA converts isopentenyl diphosphate (IPP) and dimethylallyl diphosphate (DMAPP) into the sesterterpene betaestacin I. The C-terminal prenyltransferase (PT) domain of btcA catalyzes formation of GFPP, whereas the N-terminal terpene cyclase (TC) domain catalyzes the cyclization of GFPP into betaestacin I. The cytochrome P450 monooxygenase btcB is then responsible for the six-step oxidation of betaestacin I to yield betaestacin II. The roles of the cytochrome P450 monooxygenase btcC and the alpha-ketoglutarate-dependent dioxygenase btcD have not been identified yet. The polypeptide is Alpha-ketoglutarate-dependent dioxygenase btcD (Neocamarosporium betae (Beet black rot fungus)).